The primary structure comprises 100 residues: NADH-quinone oxidoreductase subunit K (100 aa).

Transmembrane regions (helical) follow at residues 2–22 (ITLT…LVGI), 29–49 (LMLF…LAAF), and 63–83 (FFII…LIIW).

It belongs to the complex I subunit 4L family. NDH-1 is composed of 14 different subunits. Subunits NuoA, H, J, K, L, M, N constitute the membrane sector of the complex.

It is found in the cell inner membrane. The catalysed reaction is a quinone + NADH + 5 H(+)(in) = a quinol + NAD(+) + 4 H(+)(out). NDH-1 shuttles electrons from NADH, via FMN and iron-sulfur (Fe-S) centers, to quinones in the respiratory chain. The immediate electron acceptor for the enzyme in this species is believed to be ubiquinone. Couples the redox reaction to proton translocation (for every two electrons transferred, four hydrogen ions are translocated across the cytoplasmic membrane), and thus conserves the redox energy in a proton gradient. The sequence is that of NADH-quinone oxidoreductase subunit K from Nitratiruptor sp. (strain SB155-2).